A 1103-amino-acid polypeptide reads, in one-letter code: MNKKHSSPAQKKISQQVVFQRRINASKNIEQASNVCFSVLAKSMRKDSFTEFLYMFRNFLDLPVAKNIMNYRYKGDTIDIFNIKTMPFEMLEIRDVVKWLTEIFGYFSEDLNDFVKAKVAITNNILLADFEGAKRNLEKFIDDHGVCNWTIATELSLLYFQGKITEYKDKIKEFTHIEDGLSQSFLTYEGIRCNPSVTSERYRFSIGKMIEEVRIDNQPQLEETIKYRHDFSPCDVYSNMDFIFSNTCEKRIFDMYNSFKRFIFYKYNDGSDISEIVTCVEKLTNSIHDSEIEIFYKRISGTESDIKDEQYNEVIDNYINNNYERVITQSEKILLEKPYFSVIYLPYIKSLVRKKQNTSLPGPIGEIIRLSCNLFSNIEFEDSLKKLSKIYYVLLHNDWVHIIGCILDNFDGSDGINNPKRYNYVDSLLLINNKLSFRDSTNFKWLDDENISAWRRDKIKADKYFYDGEYGKALNLYSNSLDKSEKNYIEELKAKIIYCHFSLGEISVAITILSELLSKGANPRTLPINTVAEYVAKEGHYKTNNDELYNEAIILNAYNKNIIAKYIQHTSNVCENFLENIDVTDKNQITFENESIPAFFLTELLSIDVLEGMTSIIESEVDVLLTRLNIDRYIVTNEEKFDSKTVRKSKNEITNIFYKLIVQACSNEAGEGRIYVDKSSLKAKLINDVERELEILRGSDNKELNTYVELTDDHGIEYHTMSTPFMRDVFDLMMKVSDGYTIDKLYGIDQSLNVGIRHGGIVNLLWAPLKNNGIAALKSKDSKFIPNPVWRNDFGYYNKGFLDSIDKNLVLLNEKLNTIINDAKEKVHINTGEFIESAKVFNYAIEIEFVEEMAGSIDKIDGDTFIELIFNYLDEKTNDCLDYAKNNFIPKLRHEMIDAIQNTRNEIKIENINRAISQSKIQLEESIEFLQSWFNWSGTSKTPFALKAAIEKSRLILSKLHPWLEINFSGSLNTQKIFLGKHFTPIVTLLTLIFENVVKHGANRDSTEIIVDINENNDVIELSFVNKVQEPFNQDELEKFSRINEILDTEYETYSARETGSGIFKIKKILSLELKCKNHVHIHPTENSFGITIGIYDNGGMFE.

His-758 carries the phosphohistidine; by autocatalysis modification. The stretch at 818 to 851 (TIINDAKEKVHINTGEFIESAKVFNYAIEIEFVE) is one TPR repeat.

Autophosphorylated.

It carries out the reaction ATP + protein L-histidine = ADP + protein N-phospho-L-histidine.. Sensor-kinase member of the two-component regulatory system Detocs that confers resistance to bacteriophage. When the system (DtcA-DtcB-DtcC) is expressed in a susceptible E.coli (strain MG1655) it confers resistance to bacteriophages T2, T4, T5, T7, SECphi4, SECphi6 and SECphi27; the level of resistance varies, resistance to T2, T7 and SECphi4 is not very high. DtcA (this subunit) probably autophosphorylates upon sensing viral infection, and subsequently transfers the phosphate signal to DtcC which activates it, leading to an antiviral defense; DtcB may scavenge phosphorylation signals from accidental activation of DtcA. The sequence is that of Detocs histidine-protein kinase DtcA from Enterobacter cloacae (strain JD6301).